The sequence spans 481 residues: UDP-N-acetylmuramoylalanine--D-glutamate ligase (481 aa).

Glycine 108–serine 114 is an ATP binding site.

It belongs to the MurCDEF family.

It is found in the cytoplasm. It carries out the reaction UDP-N-acetyl-alpha-D-muramoyl-L-alanine + D-glutamate + ATP = UDP-N-acetyl-alpha-D-muramoyl-L-alanyl-D-glutamate + ADP + phosphate + H(+). Its pathway is cell wall biogenesis; peptidoglycan biosynthesis. Cell wall formation. Catalyzes the addition of glutamate to the nucleotide precursor UDP-N-acetylmuramoyl-L-alanine (UMA). This Bifidobacterium longum (strain DJO10A) protein is UDP-N-acetylmuramoylalanine--D-glutamate ligase.